The following is a 270-amino-acid chain: MKVALVYNDKVETLAVVKALEKLLNARKIEIDPENPDVVITIGGDGTLISGFHKYQNLVDKIRFIGVHTGHLGFYTDWRNFEINKMVDNLTKKQPSSASYPLLELIITTGAGEKKKLLALNEATIKRVSKTLKADVYIRDQFFESFKGDGLCVSTPTGSTAYSKSLGGAVIHPRLKALQMTEIASINNRVFRTLSSPIVIAPDEWITIKPETGSDDHYVVTFDGYEFNHKHIKKIEYRISQHVIRFDKYQHTHFWNRVEDAFIGQPKDKQ.

Aspartate 45 functions as the Proton acceptor in the catalytic mechanism. NAD(+) is bound by residues 45–46 (DG), 121–122 (NE), lysine 147, aspartate 149, 160–165 (TAYSKS), and alanine 184.

The protein belongs to the NAD kinase family. A divalent metal cation is required as a cofactor.

The protein resides in the cytoplasm. The enzyme catalyses NAD(+) + ATP = ADP + NADP(+) + H(+). Functionally, involved in the regulation of the intracellular balance of NAD and NADP, and is a key enzyme in the biosynthesis of NADP. Catalyzes specifically the phosphorylation on 2'-hydroxyl of the adenosine moiety of NAD to yield NADP. This chain is NAD kinase, found in Lactobacillus johnsonii (strain CNCM I-12250 / La1 / NCC 533).